We begin with the raw amino-acid sequence, 338 residues long: Probable tRNA pseudouridine synthase B (338 aa).

Asp-80 (nucleophile) is an active-site residue. In terms of domain architecture, PUA spans 247–322 (LPRIEIRDTA…IMVDTKRVLM (76 aa)).

The protein belongs to the pseudouridine synthase TruB family. Type 2 subfamily.

It catalyses the reaction uridine(55) in tRNA = pseudouridine(55) in tRNA. Could be responsible for synthesis of pseudouridine from uracil-55 in the psi GC loop of transfer RNAs. In Methanopyrus kandleri (strain AV19 / DSM 6324 / JCM 9639 / NBRC 100938), this protein is Probable tRNA pseudouridine synthase B.